Consider the following 410-residue polypeptide: Imidazolonepropionase (410 aa).

Residues His71 and His73 each contribute to the Fe(3+) site. Residues His71 and His73 each coordinate Zn(2+). Residues Arg80, Tyr143, and His175 each coordinate 4-imidazolone-5-propanoate. Residue Tyr143 coordinates N-formimidoyl-L-glutamate. His235 contacts Fe(3+). Position 235 (His235) interacts with Zn(2+). Residue Glu238 participates in 4-imidazolone-5-propanoate binding. A Fe(3+)-binding site is contributed by Asp309. Residue Asp309 coordinates Zn(2+).

Belongs to the metallo-dependent hydrolases superfamily. HutI family. Zn(2+) is required as a cofactor. Fe(3+) serves as cofactor.

It is found in the cytoplasm. The catalysed reaction is 4-imidazolone-5-propanoate + H2O = N-formimidoyl-L-glutamate. The protein operates within amino-acid degradation; L-histidine degradation into L-glutamate; N-formimidoyl-L-glutamate from L-histidine: step 3/3. Its function is as follows. Catalyzes the hydrolytic cleavage of the carbon-nitrogen bond in imidazolone-5-propanoate to yield N-formimidoyl-L-glutamate. It is the third step in the universal histidine degradation pathway. The sequence is that of Imidazolonepropionase from Thermoplasma acidophilum (strain ATCC 25905 / DSM 1728 / JCM 9062 / NBRC 15155 / AMRC-C165).